The primary structure comprises 370 residues: Adaptive-response sensory kinase SasA (370 aa).

The region spanning 152–365 (MVAHELRTPL…CFYLTVPVWQ (214 aa)) is the Histidine kinase domain. His155 carries the post-translational modification Phosphohistidine; by autocatalysis.

In terms of assembly, homooligomerizes. Interacts with KaiC. Participates in the KaiBC complex, whose core is composed of a KaiC homohexamer and 6 KaiB.

It carries out the reaction ATP + protein L-histidine = ADP + protein N-phospho-L-histidine.. Member of the two-component regulatory system SasA/RpaA involved in genome-wide circadian gene expression. One of several clock output pathways. Participates in the Kai clock protein complex, the main circadian regulator in cyanobacteria, via its interaction with KaiC. KaiC enhances the autophosphorylation activity of SasA, which then transfers its phosphate group to RpaA to activate it. In addition to its output function, recruits fold-shifted KaiB (KaiB(fs)) to KaiC to cooperatively form the KaiB(6):KaiC(6) complex (independent of SasA kinase activity). Required for robustness of the circadian rhythm of gene expression and is involved in clock output, also required for adaptation to light/dark cycles. The polypeptide is Adaptive-response sensory kinase SasA (Prochlorococcus marinus (strain MIT 9313)).